The chain runs to 1573 residues: Mediator of RNA polymerase II transcription subunit 1 (1573 aa).

The short motif at Leu-588–Leu-592 is the LXXLL motif 1 element. 3 disordered regions span residues Thr-595 to Phe-691, Ser-774 to Phe-883, and Leu-928 to Asp-1564. Over residues Pro-606–Ser-617 the composition is skewed to pro residues. The LXXLL motif 2 motif lies at Leu-629–Leu-633. Residues Glu-651–Ser-668 show a composition bias toward polar residues. A compositionally biased stretch (basic and acidic residues) spans Thr-678–Phe-691. Polar residues-rich tracts occupy residues Arg-791 to Phe-804, Gly-835 to Phe-864, and Gln-934 to Leu-944. Residues Leu-949–Glu-961 are compositionally biased toward basic and acidic residues. Gly residues predominate over residues Gly-963–Ser-973. Composition is skewed to low complexity over residues Pro-1025 to Gly-1038, Lys-1053 to Ser-1085, Ser-1092 to Gly-1116, Ser-1124 to Lys-1143, and Ser-1155 to Ser-1164. Residues Met-1176–Ser-1193 show a composition bias toward polar residues. A compositionally biased stretch (low complexity) spans Leu-1226–Ser-1277. The span at Gly-1278–Lys-1290 shows a compositional bias: polar residues. Basic and acidic residues predominate over residues Pro-1350 to Lys-1362. Polar residues-rich tracts occupy residues Ser-1420 to Thr-1435 and Pro-1443 to Asp-1457. The segment covering Glu-1461–Ser-1471 has biased composition (low complexity). The segment covering Lys-1496–Lys-1505 has biased composition (basic residues). Over residues Arg-1506–Lys-1518 the composition is skewed to basic and acidic residues.

This sequence belongs to the Mediator complex subunit 1 family. In terms of assembly, component of the Mediator complex.

The protein resides in the nucleus. In terms of biological role, component of the Mediator complex, a coactivator involved in the regulated transcription of nearly all RNA polymerase II-dependent genes. Mediator functions as a bridge to convey information from gene-specific regulatory proteins to the basal RNA polymerase II transcription machinery. Mediator is recruited to promoters by direct interactions with regulatory proteins and serves as a scaffold for the assembly of a functional preinitiation complex with RNA polymerase II and the general transcription factors. The polypeptide is Mediator of RNA polymerase II transcription subunit 1 (med1) (Xenopus tropicalis (Western clawed frog)).